The following is a 352-amino-acid chain: uncharacterized protein (352 aa).

A coiled-coil region spans residues 285–352; it reads FQHLRNARER…IKSEIRRLQR (68 aa).

This is an uncharacterized protein from Emericella nidulans (strain FGSC A4 / ATCC 38163 / CBS 112.46 / NRRL 194 / M139) (Aspergillus nidulans).